We begin with the raw amino-acid sequence, 337 residues long: Ribosomal RNA small subunit methyltransferase H (337 aa).

S-adenosyl-L-methionine contacts are provided by residues 45-47 (GGH), aspartate 64, phenylalanine 91, aspartate 120, and glutamine 127.

Belongs to the methyltransferase superfamily. RsmH family.

It localises to the cytoplasm. It carries out the reaction cytidine(1402) in 16S rRNA + S-adenosyl-L-methionine = N(4)-methylcytidine(1402) in 16S rRNA + S-adenosyl-L-homocysteine + H(+). In terms of biological role, specifically methylates the N4 position of cytidine in position 1402 (C1402) of 16S rRNA. This Corynebacterium glutamicum (strain R) protein is Ribosomal RNA small subunit methyltransferase H.